A 376-amino-acid polypeptide reads, in one-letter code: Alcohol dehydrogenase class-3 (376 aa).

Ala-1 bears the N-acetylalanine mark. 7 residues coordinate Zn(2+): Cys-47, His-69, Cys-99, Cys-102, Cys-105, Cys-113, and Cys-176.

Belongs to the zinc-containing alcohol dehydrogenase family. Class-III subfamily. As to quaternary structure, homodimer. Requires Zn(2+) as cofactor.

Its subcellular location is the cytoplasm. The catalysed reaction is a primary alcohol + NAD(+) = an aldehyde + NADH + H(+). The enzyme catalyses a secondary alcohol + NAD(+) = a ketone + NADH + H(+). It catalyses the reaction S-(hydroxymethyl)glutathione + NADP(+) = S-formylglutathione + NADPH + H(+). It carries out the reaction S-(hydroxymethyl)glutathione + NAD(+) = S-formylglutathione + NADH + H(+). The catalysed reaction is S-nitrosoglutathione + NADH + H(+) = S-(hydroxysulfenamide)glutathione + NAD(+). Class-III ADH is remarkably ineffective in oxidizing ethanol, but it readily catalyzes the oxidation of long-chain primary alcohols and the oxidation of S-(hydroxymethyl) glutathione. Also acts as a S-nitroso-glutathione reductase by catalyzing the NADH-dependent reduction of S-nitrosoglutathione, thereby regulating protein S-nitrosylation. In Scyliorhinus canicula (Small-spotted catshark), this protein is Alcohol dehydrogenase class-3.